A 339-amino-acid polypeptide reads, in one-letter code: tRNA pseudouridine synthase B (339 aa).

Aspartate 40 acts as the Nucleophile in catalysis. One can recognise an RPE1 insert domain in the interval 262–307 (FRRLSKFAYREEFEENTERSTAAYTLVREDANTGLTYKLPLEVELS).

The protein belongs to the pseudouridine synthase TruB family. Type 1 subfamily.

The catalysed reaction is uridine(55) in tRNA = pseudouridine(55) in tRNA. Responsible for synthesis of pseudouridine from uracil-55 in the psi GC loop of transfer RNAs. The protein is tRNA pseudouridine synthase B of Rickettsia felis (strain ATCC VR-1525 / URRWXCal2) (Rickettsia azadi).